Here is a 192-residue protein sequence, read N- to C-terminus: Elongation factor P (192 aa).

This sequence belongs to the elongation factor P family.

The protein resides in the cytoplasm. It participates in protein biosynthesis; polypeptide chain elongation. Its function is as follows. Involved in peptide bond synthesis. Stimulates efficient translation and peptide-bond synthesis on native or reconstituted 70S ribosomes in vitro. Probably functions indirectly by altering the affinity of the ribosome for aminoacyl-tRNA, thus increasing their reactivity as acceptors for peptidyl transferase. The chain is Elongation factor P (efp) from Borreliella burgdorferi (strain ATCC 35210 / DSM 4680 / CIP 102532 / B31) (Borrelia burgdorferi).